A 633-amino-acid polypeptide reads, in one-letter code: tRNA uridine 5-carboxymethylaminomethyl modification enzyme MnmG (633 aa).

Residues Gly-13–Gly-18, Val-125, and Ser-180 each bind FAD. NAD(+) is bound at residue Gly-273–Phe-287. Gln-370 is an FAD binding site.

It belongs to the MnmG family. As to quaternary structure, homodimer. Heterotetramer of two MnmE and two MnmG subunits. It depends on FAD as a cofactor.

The protein localises to the cytoplasm. In terms of biological role, NAD-binding protein involved in the addition of a carboxymethylaminomethyl (cmnm) group at the wobble position (U34) of certain tRNAs, forming tRNA-cmnm(5)s(2)U34. The protein is tRNA uridine 5-carboxymethylaminomethyl modification enzyme MnmG of Alteromonas mediterranea (strain DSM 17117 / CIP 110805 / LMG 28347 / Deep ecotype).